Here is a 175-residue protein sequence, read N- to C-terminus: MLWIWNALIVFVTVIGMEVIAALAHKYIMHGWGWGWHLSHHEPRKGAFEVNDLYAVVFAALSILLIYLGSTGMWPLQWIGAGMTAYGLLYFMVHDGLVHQRWPFRYIPRKGYLKRLYMAHRMHHAVRGKEGCVSFGFLYAPPLSKLQATLRERHGARAGAARDAQGGEDEPASGK.

A Fatty acid hydroxylase domain is found at F11–G136.

The protein belongs to the sterol desaturase family.

The catalysed reaction is all-trans-beta-carotene + 4 reduced [2Fe-2S]-[ferredoxin] + 2 O2 + 4 H(+) = all-trans-zeaxanthin + 4 oxidized [2Fe-2S]-[ferredoxin] + 2 H2O. It functions in the pathway carotenoid biosynthesis; zeaxanthin biosynthesis. Catalyzes the hydroxylation reaction from beta-carotene to zeaxanthin. The sequence is that of Beta-carotene hydroxylase (crtZ) from Pantoea ananas (Erwinia uredovora).